The following is a 453-amino-acid chain: Glutamyl-tRNA reductase (453 aa).

Substrate-binding positions include 52-55 (TCNR), Ser105, 110-112 (EDQ), and Gln116. The active-site Nucleophile is Cys53. NADP(+) is bound at residue 184-189 (GAGEMA). Residues 413–424 (PGLEPEPTELPT) are compositionally biased toward low complexity. The tract at residues 413–453 (PGLEPEPTELPTVPDGPEGVPEELRERMSSGMLEQFSTNDD) is disordered.

It belongs to the glutamyl-tRNA reductase family. Homodimer.

It catalyses the reaction (S)-4-amino-5-oxopentanoate + tRNA(Glu) + NADP(+) = L-glutamyl-tRNA(Glu) + NADPH + H(+). It functions in the pathway porphyrin-containing compound metabolism; protoporphyrin-IX biosynthesis; 5-aminolevulinate from L-glutamyl-tRNA(Glu): step 1/2. Catalyzes the NADPH-dependent reduction of glutamyl-tRNA(Glu) to glutamate 1-semialdehyde (GSA). The polypeptide is Glutamyl-tRNA reductase (Natronomonas pharaonis (strain ATCC 35678 / DSM 2160 / CIP 103997 / JCM 8858 / NBRC 14720 / NCIMB 2260 / Gabara) (Halobacterium pharaonis)).